Consider the following 244-residue polypeptide: Octanoyltransferase (244 aa).

The BPL/LPL catalytic domain maps to 49 to 237 (VAPGNFLIFC…HLTALFELHI (189 aa)). Substrate-binding positions include 94–101 (RGGDITYH), 167–169 (AMG), and 180–182 (GFA). Cys198 (acyl-thioester intermediate) is an active-site residue.

It belongs to the LipB family.

It is found in the cytoplasm. The catalysed reaction is octanoyl-[ACP] + L-lysyl-[protein] = N(6)-octanoyl-L-lysyl-[protein] + holo-[ACP] + H(+). It participates in protein modification; protein lipoylation via endogenous pathway; protein N(6)-(lipoyl)lysine from octanoyl-[acyl-carrier-protein]: step 1/2. In terms of biological role, catalyzes the transfer of endogenously produced octanoic acid from octanoyl-acyl-carrier-protein onto the lipoyl domains of lipoate-dependent enzymes. Lipoyl-ACP can also act as a substrate although octanoyl-ACP is likely to be the physiological substrate. This chain is Octanoyltransferase, found in Cytophaga hutchinsonii (strain ATCC 33406 / DSM 1761 / CIP 103989 / NBRC 15051 / NCIMB 9469 / D465).